We begin with the raw amino-acid sequence, 187 residues long: MKQILDFIPLIIFFALYKMYDIYVATGALIAATAIQIVVTYALYKKVEKMQLITFLMVAIFGGMTIFLHDDNFIKWKVTIVYAVFAIGLTVSHVMGKSAIKGMLGKEITLPESVWANINWAWVGFFTFCAGLNIYVAYQLPLDVWVNFKVFGLLAATLVFTVLTGGYIYKHLPKEQNGQSSDVPTDE.

5 helical membrane-spanning segments follow: residues Ala-25–Lys-45, Met-50–Asp-70, Trp-76–Gly-96, Ile-118–Tyr-138, and Phe-148–Ile-168.

This sequence belongs to the YciB family.

Its subcellular location is the cell inner membrane. Its function is as follows. Plays a role in cell envelope biogenesis, maintenance of cell envelope integrity and membrane homeostasis. The polypeptide is Inner membrane-spanning protein YciB (Vibrio vulnificus (strain CMCP6)).